A 174-amino-acid chain; its full sequence is Small heat shock protein OV25-1 (174 aa).

The 112-residue stretch at 50 to 161 folds into the sHSP domain; that stretch reads LNECNIGNTL…ASRNIPIRAS (112 aa). Residues 153-174 form a disordered region; it reads SRNIPIRASPKEPEAKQKTKKQ. The span at 161–174 shows a compositional bias: basic and acidic residues; sequence SPKEPEAKQKTKKQ.

This sequence belongs to the small heat shock protein (HSP20) family.

This chain is Small heat shock protein OV25-1 (OV25-1), found in Onchocerca volvulus.